Here is a 413-residue protein sequence, read N- to C-terminus: Exodeoxyribonuclease I (413 aa).

Residues 12–193 (LFYDYETFGI…VSDVYATIEI (182 aa)) form the Exonuclease domain. The Mg(2+) site is built by Asp15, Glu17, and Asp186. Glu17 serves as a coordination point for substrate. Residues 202–349 (PRLFDFFFKI…QNIKIIFSKN (148 aa)) enclose the ExoI SH3-like domain. Positions 350 to 413 (NNTNQFFNVD…RYRARNFFIH (64 aa)) constitute an ExoI C-terminal domain.

As to quaternary structure, monomer. Interacts with ssb (via C-terminus); this interaction stimulates the exonuclease activity by recruiting the enzyme to its substrate. Requires Mg(2+) as cofactor.

The catalysed reaction is Exonucleolytic cleavage in the 3'- to 5'-direction to yield nucleoside 5'-phosphates.. Its function is as follows. Degrades single-stranded DNA (ssDNA) in a highly processive manner. Also functions as a DNA deoxyribophosphodiesterase that releases deoxyribose-phosphate moieties following the cleavage of DNA at an apurinic/apyrimidinic (AP) site by either an AP endonuclease or AP lyase. The polypeptide is Exodeoxyribonuclease I (sbcB) (Buchnera aphidicola subsp. Acyrthosiphon pisum (strain APS) (Acyrthosiphon pisum symbiotic bacterium)).